The following is a 165-amino-acid chain: uncharacterized protein (165 aa).

The segment covering 22 to 34 (QQANQENMSSRTD) has biased composition (polar residues). A disordered region spans residues 22–45 (QQANQENMSSRTDSPIPPFGESEQ).

This is an uncharacterized protein from Homo sapiens (Human).